The following is a 91-amino-acid chain: Large ribosomal subunit protein uL23 (91 aa).

It belongs to the universal ribosomal protein uL23 family. Part of the 50S ribosomal subunit. Contacts protein L29, and trigger factor when it is bound to the ribosome.

One of the early assembly proteins it binds 23S rRNA. One of the proteins that surrounds the polypeptide exit tunnel on the outside of the ribosome. Forms the main docking site for trigger factor binding to the ribosome. The protein is Large ribosomal subunit protein uL23 of Staphylococcus epidermidis (strain ATCC 35984 / DSM 28319 / BCRC 17069 / CCUG 31568 / BM 3577 / RP62A).